We begin with the raw amino-acid sequence, 386 residues long: MGSRTDPWSARLAKAAEQRHADGGWRQRPTLSDVAPFIDFAGNDYLGLADDPRLAEAQAEAARRLGAGAKASHLVSGHLEIHERLERRLAQLTGRPRALLFSTGYMANLGVLQALCDHHTRVFQDRLNHASLIDGARLAGATSRRFHHRDLEDLERLLARAPDDAPTLVVSDGVFSMDGDVAEVGALAATARRHGAWLMIDDAHGLGVLGEVGDGCVGRAHDRREVPVLVGTLGKALGSAGAFVAGDEALIDHLIQFARPYVYTTAQPPGVAAATLTALDVLEREPERRARLHERSADFRREAGTLGLPLTDSRTPIQPIVLGDNARVMRWAERLARAGLRVGAIRAPTVPKGEARLRITLSATHDDDALDALLEGLATCQREEAA.

Arg26 is a binding site for substrate. 104–105 (GY) is a pyridoxal 5'-phosphate binding site. His129 lines the substrate pocket. Pyridoxal 5'-phosphate contacts are provided by Ser176, His204, and Thr232. Residue Lys235 is modified to N6-(pyridoxal phosphate)lysine. Thr349 serves as a coordination point for substrate.

This sequence belongs to the class-II pyridoxal-phosphate-dependent aminotransferase family. BioF subfamily. In terms of assembly, homodimer. Requires pyridoxal 5'-phosphate as cofactor.

The catalysed reaction is 6-carboxyhexanoyl-[ACP] + L-alanine + H(+) = (8S)-8-amino-7-oxononanoate + holo-[ACP] + CO2. It participates in cofactor biosynthesis; biotin biosynthesis. Functionally, catalyzes the decarboxylative condensation of pimeloyl-[acyl-carrier protein] and L-alanine to produce 8-amino-7-oxononanoate (AON), [acyl-carrier protein], and carbon dioxide. The chain is 8-amino-7-oxononanoate synthase from Chromohalobacter salexigens (strain ATCC BAA-138 / DSM 3043 / CIP 106854 / NCIMB 13768 / 1H11).